Here is a 271-residue protein sequence, read N- to C-terminus: Putative carboxymethylenebutenolidase (271 aa).

Active-site residues include C147, D204, and H236.

This sequence belongs to the dienelactone hydrolase family.

It catalyses the reaction 2-(5-oxo-2,5-dihydrofuran-2-ylidene)acetate + H2O = 4-oxohex-2-enedioate + H(+). The protein is Putative carboxymethylenebutenolidase (ysgA) of Escherichia coli (strain K12).